The primary structure comprises 319 residues: Methyltransferase tpcM (319 aa).

Residues 63–155 (DVGAGIGPYA…QLRPGGTFAC (93 aa)) form a methyltransferase domain region.

The protein belongs to the methyltransferase superfamily. Specifically expressed in conidia.

Its pathway is secondary metabolite biosynthesis. In terms of biological role, methyltransferase; part of the gene cluster that mediates the biosynthesis of trypacidin, a mycotoxin with antiprotozoal activity and that plays a role in the infection process. The pathway begins with the synthesis of atrochrysone thioester by the polyketide synthase (PKS) tpcC. The atrochrysone carboxyl ACP thioesterase tpcB then breaks the thioester bond and releases the atrochrysone carboxylic acid from tpcC. The decarboxylase tpcK converts atrochrysone carboxylic acid to atrochrysone which is further reduced into emodin anthrone. The next step is performed by the emodin anthrone oxygenase tpcL that catalyzes the oxidation of emodinanthrone to emodin. Emodin O-methyltransferase encoded by tpcA catalyzes methylation of the 8-hydroxy group of emodin to form questin. Ring cleavage of questin by questin oxidase tpcI leads to desmethylsulochrin via several intermediates including questin epoxide. Another methylation step catalyzed by tpcM leads to the formation of sulochrin which is further converted to monomethylsulfochrin by tpcH. Finally, the tpcJ catalyzes the conversion of monomethylsulfochrin to trypacidin. Trypacidin is toxic for human pulmonary and bronchial epithelial cells by initiating the intracellular formation of nitric oxide (NO) and hydrogen peroxide (H(2)O(2)), thus triggering host necrotic cell death. The trypacidin pathway is also able to produce endocrocin via a distinct route from the endocrocin Enc pathway. This Aspergillus fumigatus (strain ATCC MYA-4609 / CBS 101355 / FGSC A1100 / Af293) (Neosartorya fumigata) protein is Methyltransferase tpcM.